The sequence spans 475 residues: uncharacterized protein (475 aa).

Residues 19-39 (IKVGVFFVAILLILTGILLTI) form a helical membrane-spanning segment. 2 disordered regions span residues 55–79 (GEYHELNTSPNENSTALQPDENATS) and 330–350 (SSPFNPNRRHPVTGRIRPHKG). Polar residues predominate over residues 60–79 (LNTSPNENSTALQPDENATS). Basic residues predominate over residues 336–348 (NRRHPVTGRIRPH). Zn(2+) is bound at residue histidine 348.

The protein in the central section; belongs to the OapA family. In the C-terminal section; belongs to the peptidase M23B family. Requires Zn(2+) as cofactor.

The protein resides in the cell membrane. This is an uncharacterized protein from Haemophilus influenzae (strain ATCC 51907 / DSM 11121 / KW20 / Rd).